The chain runs to 294 residues: Deubiquitinase OTUD6B (294 aa).

The interval 85–120 (VTSLDLGSEEPVQQPRVSKAQKRREKKAAQEKERDD) is disordered. A compositionally biased stretch (basic and acidic residues) spans 111-120 (KAAQEKERDD). The OTU domain occupies 150-287 (LQIRQIPSDG…GEHYNSVEQL (138 aa)). The tract at residues 155 to 161 (IPSDGHC) is cys-loop. Asp158 is an active-site residue. The active-site Nucleophile is the Cys161. Residues 222–232 (IVNTPAWGGQL) are variable-loop. The interval 270-280 (YMRHAYGLGEH) is his-loop. His280 is a catalytic residue.

It carries out the reaction Thiol-dependent hydrolysis of ester, thioester, amide, peptide and isopeptide bonds formed by the C-terminal Gly of ubiquitin (a 76-residue protein attached to proteins as an intracellular targeting signal).. Its function is as follows. Deubiquitinating enzyme that may play a role in the ubiquitin-dependent regulation of different cellular processes. The polypeptide is Deubiquitinase OTUD6B (otud6b) (Xenopus laevis (African clawed frog)).